The sequence spans 245 residues: Probable phosphatase YpAngola_A2446 (245 aa).

9 residues coordinate Zn(2+): H7, H9, H15, H40, E73, H101, H131, D192, and H194.

Belongs to the PHP family. As to quaternary structure, homotrimer. The cofactor is Zn(2+).

In Yersinia pestis bv. Antiqua (strain Angola), this protein is Probable phosphatase YpAngola_A2446.